Reading from the N-terminus, the 222-residue chain is Peptide methionine sulfoxide reductase MsrA 1 (222 aa).

Residue C57 is part of the active site.

It belongs to the MsrA Met sulfoxide reductase family.

It catalyses the reaction L-methionyl-[protein] + [thioredoxin]-disulfide + H2O = L-methionyl-(S)-S-oxide-[protein] + [thioredoxin]-dithiol. It carries out the reaction [thioredoxin]-disulfide + L-methionine + H2O = L-methionine (S)-S-oxide + [thioredoxin]-dithiol. Its function is as follows. Has an important function as a repair enzyme for proteins that have been inactivated by oxidation. Catalyzes the reversible oxidation-reduction of methionine sulfoxide in proteins to methionine. The protein is Peptide methionine sulfoxide reductase MsrA 1 (msrA1) of Synechocystis sp. (strain ATCC 27184 / PCC 6803 / Kazusa).